The chain runs to 2115 residues: Nuclear mitotic apparatus protein 1 (2115 aa).

Residues 1-212 (MTLHATRGAA…SPMGDILQTP (212 aa)) form a head (Globular) region. Ser-162 is subject to Phosphoserine. Residue Thr-163 is modified to Phosphothreonine. Phosphoserine is present on residues Ser-169 and Ser-203. Phosphothreonine is present on Thr-211. Residues 213–1699 (QFQMRRLKKQ…ADQQLRDLGK (1487 aa)) adopt a coiled-coil conformation. Ser-271 carries the post-translational modification Phosphoserine. An N6-acetyllysine modification is found at Lys-379. Ser-388 and Ser-395 each carry phosphoserine. Over residues 549 to 560 (LRHQVEQLSSSL) the composition is skewed to low complexity. Disordered regions lie at residues 549-593 (LRHQ…EERE) and 746-766 (LVEQ…GRKG). Over residues 561 to 581 (KQKEQQLKEVAEKQEATRQDH) the composition is skewed to basic and acidic residues. Ser-820 is modified (phosphoserine). An N6-acetyllysine modification is found at Lys-891. Basic and acidic residues-rich tracts occupy residues 926-950 (AGEQ…RQPE) and 996-1013 (QEER…TQER). Disordered regions lie at residues 926–958 (AGEQ…QQGR) and 988–1013 (LMES…TQER). Residue Thr-1047 is modified to Phosphothreonine; by PLK1. The span at 1090 to 1102 (LKEQLAKKEKEHA) shows a compositional bias: basic and acidic residues. Disordered stretches follow at residues 1090-1225 (LKEQ…RKNS) and 1275-1296 (ETAS…EVQS). 2 stretches are compositionally biased toward low complexity: residues 1103 to 1112 (SGSGAQSEAA) and 1133 to 1142 (EQQCQKQQEQ). Positions 1145-1163 (SLERSLEAERASRAERDSA) are enriched in basic and acidic residues. Ser-1187 carries the phosphoserine modification. Residues 1198-1224 (KVQDHSKAEDEWKAQVARGRQEAERKN) are compositionally biased toward basic and acidic residues. Phosphoserine is present on Ser-1225. Positions 1283–1296 (AAERSSALREEVQS) are enriched in basic and acidic residues. The residue at position 1511 (Lys-1511) is an N6-acetyllysine. The residue at position 1601 (Ser-1601) is a Phosphoserine. Lys-1699 is covalently cross-linked (Glycyl lysine isopeptide (Lys-Gly) (interchain with G-Cter in SUMO2)). The interval 1699 to 1876 (KFQVATDALK…NSALLSLPGY (178 aa)) is membrane-binding domain 1. Residues 1700–2115 (FQVATDALKS…TPRAKGKAKH (416 aa)) form a tail (Globular) region. Ser-1721, Ser-1724, and Ser-1728 each carry phosphoserine. Residues 1734–1761 (PLSITSKLPRTQPDGTSVPGEPASPISQ) are disordered. Positions 1735–1748 (LSITSKLPRTQPDG) are enriched in polar residues. The Tankyrase-binding domain motif lies at 1742–1748 (PRTQPDG). Ser-1757 and Ser-1760 each carry phosphoserine. Residue Lys-1766 forms a Glycyl lysine isopeptide (Lys-Gly) (interchain with G-Cter in SUMO1); alternate linkage. Lys-1766 participates in a covalent cross-link: Glycyl lysine isopeptide (Lys-Gly) (interchain with G-Cter in SUMO2); alternate. A phosphoserine; by PLK1 mark is found at Ser-1769 and Ser-1772. Tyr-1774 is subject to Phosphotyrosine. Thr-1776 bears the Phosphothreonine mark. Ser-1788 carries the post-translational modification Phosphoserine. The 4.1-binding domain stretch occupies residues 1788 to 1810 (SSLDSLGDVFLDSGRKTRSARRR). Ser-1789 carries the phosphoserine; by PLK1 modification. 2 positions are modified to phosphoserine: Ser-1792 and Ser-1800. A Phosphothreonine modification is found at Thr-1804. Lys-1822 is covalently cross-linked (Glycyl lysine isopeptide (Lys-Gly) (interchain with G-Cter in SUMO2)). Disordered regions lie at residues 1826–1901 (EEPD…GRNS) and 1955–2115 (EMKT…KAKH). Ser-1830 and Ser-1833 each carry phosphoserine. Over residues 1830-1857 (SANSSFYSTRSAPASQASLRATSSTQSL) the composition is skewed to polar residues. At Ser-1834 the chain carries Phosphoserine; by PLK1. Tyr-1836 is modified (phosphotyrosine). Phosphoserine is present on Ser-1840. A Phosphoserine; alternate modification is found at Ser-1844. The O-linked (GlcNAc) serine; alternate glycan is linked to Ser-1844. Ser-1862 and Ser-1887 each carry phosphoserine. Polar residues predominate over residues 1879–1891 (TTRSSARRSQAGV). Residues 1882–1985 (SSARRSQAGV…AEGTGITTRQ (104 aa)) form a tubulin-binding domain region. Positions 1892 to 1926 (SSGAPPGRNSFYMGTCQDEPEQLDDWNRIAELQQR) are GPSM2-binding domain. The segment covering 1955–1966 (EMKTGDPQETLR) has biased composition (basic and acidic residues). Ser-1969 is subject to Phosphoserine. A membrane-binding domain 2 region spans residues 1981–2060 (ITTRQQRKRV…SILNTPKKLG (80 aa)). Residues 1984 to 1989 (RQQRKR) carry the Nuclear localization signal motif. Ser-1991 is subject to Phosphoserine. Thr-2000 carries the post-translational modification Phosphothreonine. Ser-2003 is modified (phosphoserine). Thr-2015 bears the Phosphothreonine; by CDK1 mark. The span at 2015 to 2032 (TPRDRHEGRKQSTTEAQK) shows a compositional bias: basic and acidic residues. Ser-2047 bears the Phosphoserine mark. At Thr-2055 the chain carries Phosphothreonine; by CDK1. Ser-2062 and Ser-2077 each carry phosphoserine. The residue at position 2087 (Ser-2087) is a Phosphoserine; by CDK1. Residues 2089–2108 (RIATTTASAATAAAIGATPR) are compositionally biased toward low complexity. Thr-2106 bears the Phosphothreonine; by CDK1 mark.

In terms of assembly, homodimer. Also forms multiarm oligomers by association of C-terminal tail domains, oligomers may further assemble to form a hexagonal nuclear lattice-like network. Associates with the dynein-dynactin complex; this association promotes the transport and accumulation of NUMA1 at the mitotic spindle poles that is inhibited by the BRISC complex in a PLK1-dependent manner. Part of a spindle orientation complex at least composed of GNAI1, GPSM2 and NUMA1. Interacts (via C-terminus) with microtubules (MTs); this interaction is direct and promotes both MT bundle formation and stability in a dynein-dynactin complex- and CDK1-independent manner. Interacts with EPB41 and EPB41L2; these interactions are negatively regulated by CDK1 during metaphase and are important for anaphase-specific localization of NUMA1 in symmetrically dividing cells. Interacts (via C-terminus) with GPSM2 (via TPR repeats); this interaction is direct, prevented by competitive binding of INSC, is inhibited in a PLK1-dependent manner, blocks the association of NUMA1 with MTs and inhibits NUMA1-induced MT bundle formation, prevents the association of NUMA1 with SPAG5, induces mitotic spindle pole localization of GPSM2, both metaphase cell cortex localization of NUMA1 and mitotic spindle organization. Does not interact with GPSM2 during anaphase. Interacts (via C-terminus) with the nuclear importin alpha/importin beta receptor; this interaction is inhibited by RanGTP. Interacts (via C-terminus) with KPNB1; this interaction is inhibited by RanGTP and the BRISC complex. Interacts with ABRAXAS2 and the BRISC complex; these interactions regulate mitotic spindle assembly. Interacts (via N-terminal end of the coiled-coil domain) with RAE1; this interaction promotes mitotic spindle formation. Interacts (via C-terminus) with SPAG5 (via C-terminus); this interaction promotes the recruitment of SPAG5 to the MTs at spindle poles in a dynein-dynactin-dependent manner and regulates mitotic spindle organization and proper chromosome alignment during mitosis. Interacts with TNKS; this interaction occurs at the onset of mitosis. Interacts with TNKS2. Interacts with tubulin. Interacts with KHDC3L (via C-terminus). In terms of processing, phosphorylation and dephosphorylation on Thr-2055 regulates the extent of cortical NUMA1 and the dynein-dynactin complex localization during mitotic metaphase and anaphase. In metaphase, phosphorylation on Thr-2055 occurs in a kinase CDK1-dependent manner; this phosphorylation maintains low levels of cortical dynein-dynactin complex at metaphase, and hence proper spindle positioning. In anaphase, dephosphorylated on Thr-2055 by phosphatase PPP2CA; this dephosphorylation stimulates its membrane association and with the dynein-dynactin complex its enrichment at the cell cortex, and hence robust spindle elongation. Probably also phosphorylated on Thr-2015 and Ser-2087 by CDK1; these phosphorylations may regulate its cell cortex recruitment during metaphase and anaphase. Phosphorylated on Thr-1047, Ser-1769, Ser-1772, Ser-1789 and Ser-1834 by PLK1; these phosphorylations induce cortical dynein-dynactin complex dissociation from the NUMA1-GPSM2 complex and negatively regulates cortical dynein-dynactin complex localization. Post-translationally, ADP-ribosylated by TNKS at the onset of mitosis; ADP-ribosylation is not required for its localization to spindle poles. O-glycosylated during cytokinesis at sites identical or close to phosphorylation sites, this interferes with the phosphorylation status. In terms of processing, ubiquitinated with 'Lys-63'-linked polyubiquitin chains. Deubiquitination by the BRISC complex is important for the incorporation of NUMA1 into mitotic spindle poles and normal spindle pole function, probably by modulating interactions between NUMA1, dynein-dynactin complex and importin-beta.

The protein resides in the nucleus. It is found in the nucleoplasm. The protein localises to the nucleus matrix. It localises to the chromosome. Its subcellular location is the cytoplasm. The protein resides in the cytoskeleton. It is found in the microtubule organizing center. The protein localises to the centrosome. It localises to the spindle pole. Its subcellular location is the cell cortex. The protein resides in the cell membrane. It is found in the lateral cell membrane. The protein localises to the cytosol. In terms of biological role, microtubule (MT)-binding protein that plays a role in the formation and maintenance of the spindle poles and the alignement and the segregation of chromosomes during mitotic cell division. Functions to tether the minus ends of MTs at the spindle poles, which is critical for the establishment and maintenance of the spindle poles. Plays a role in the establishment of the mitotic spindle orientation during metaphase and elongation during anaphase in a dynein-dynactin-dependent manner. In metaphase, part of a ternary complex composed of GPSM2 and G(i) alpha proteins, that regulates the recruitment and anchorage of the dynein-dynactin complex in the mitotic cell cortex regions situated above the two spindle poles, and hence regulates the correct oritentation of the mitotic spindle. During anaphase, mediates the recruitment and accumulation of the dynein-dynactin complex at the cell membrane of the polar cortical region through direct association with phosphatidylinositol 4,5-bisphosphate (PI(4,5)P2), and hence participates in the regulation of the spindle elongation and chromosome segregation. Also binds to other polyanionic phosphoinositides, such as phosphatidylinositol 3-phosphate (PIP), lysophosphatidic acid (LPA) and phosphatidylinositol triphosphate (PIP3), in vitro. Also required for proper orientation of the mitotic spindle during asymmetric cell divisions. Plays a role in mitotic MT aster assembly. Involved in anastral spindle assembly. Positively regulates TNKS protein localization to spindle poles in mitosis. Highly abundant component of the nuclear matrix where it may serve a non-mitotic structural role, occupies the majority of the nuclear volume. Required for epidermal differentiation and hair follicle morphogenesis. The chain is Nuclear mitotic apparatus protein 1 from Homo sapiens (Human).